The primary structure comprises 230 residues: Metaxin-2 homolog (230 aa).

The protein belongs to the metaxin family. In terms of assembly, associates with the mitochondrial contact site and cristae organizing system (MICOS) complex (also known as MINOS or MitOS complex).

The protein localises to the mitochondrion outer membrane. Functionally, involved in transport of proteins into the mitochondrion. In Caenorhabditis elegans, this protein is Metaxin-2 homolog (mtx-2).